The sequence spans 220 residues: Botcinic acid biosynthesis cluster B protein 12 (220 aa).

The protein operates within polyketide biosynthesis. Functionally, part of the gene cluster B that mediates the biosynthesis of botcinic acid and its botcinin derivatives, acetate-derived polyketides that contribute to virulence when combined with the sesquiterpene botrydial. Botcinic acid and its derivatives have been shown to induce chlorosis and necrosis during host plant infection, but also have antifungal activities. Two polyketide synthases, BOA6 and BOA9, are involved in the biosynthesis of botcinins. BOA6 mediates the formation of the per-methylated tetraketide core by condensation of four units of malonyl-CoA with one unit of acetyl-CoA, which would be methylated in activated methylene groups to yield a bicyclic acid intermediate that could then either be converted to botrylactone derivatives or lose the starter acetate unit through a retro-Claisen type C-C bond cleavage to yield botcinin derivatives. The second polyketide synthase, BOA9, is probably required for the biosynthesis of the tetraketide side chain of botcinins. The methyltransferase (MT) domain within BOA6 is probably responsible for the incorporation of four methyl groups. The trans-enoyl reductase BOA5 might take over the enoyl reductase function of BOA6 that misses an ER domain. The monooxygenases BOA2, BOA3 and BOA4 might be involved in further hydroxylations at C4, C5 and C8, whereas BOA7, close to BOA9, could potentially be involved in the hydroxylation at C4 in the side chain of botcinins. This is Botcinic acid biosynthesis cluster B protein 12 from Botryotinia fuckeliana (strain B05.10) (Noble rot fungus).